Consider the following 484-residue polypeptide: Poly(A) RNA polymerase GLD2 (484 aa).

S62 and S69 each carry phosphoserine. A disordered region spans residues 72 to 97; it reads FRGRKRLSDEKNLPLDGKRQRFHSPH. The Nuclear localization signal signature appears at 76–92; the sequence is KRLSDEKNLPLDGKRQR. Residues 77–90 show a composition bias toward basic and acidic residues; sequence RLSDEKNLPLDGKR. S95 carries the post-translational modification Phosphoserine. Residues D213 and D215 each coordinate Mg(2+). In terms of domain architecture, PAP-associated spans 386–440; sequence NLGDLLLGFLKYYATEFDWNSQMISVREAKAIPRPDGIEWRNKYICVEEPFDGTN.

This sequence belongs to the DNA polymerase type-B-like family. GLD2 subfamily. In terms of assembly, interacts with CPEB1, CPEB2, CPSF1 and PABPC1. Interacts with QKI isoform QKI7; promoting recruitment to miRNA miR-122 and miR-122 stabilization. It depends on Mg(2+) as a cofactor. Requires Mn(2+) as cofactor. In terms of tissue distribution, expressed in brain. Within brain, it is expressed in cerebellum, hippocampus and medulla.

The protein resides in the cytoplasm. It is found in the nucleus. It catalyses the reaction RNA(n) + ATP = RNA(n)-3'-adenine ribonucleotide + diphosphate. In terms of biological role, cytoplasmic poly(A) RNA polymerase that adds successive AMP monomers to the 3'-end of specific RNAs, forming a poly(A) tail. In contrast to the canonical nuclear poly(A) RNA polymerase, it only adds poly(A) to selected cytoplasmic mRNAs. Does not play a role in replication-dependent histone mRNA degradation. Adds a single nucleotide to the 3' end of specific miRNAs, monoadenylation stabilizes and prolongs the activity of some but not all miRNAs. The polypeptide is Poly(A) RNA polymerase GLD2 (Homo sapiens (Human)).